The following is a 316-amino-acid chain: Very-long-chain 3-oxooacyl-coA reductase let-767 (316 aa).

NADP(+)-binding positions include 52–80 (ITGATDGIGKAYAFELARRGFNVFIVSRT) and Asp106. Ser189 lines the substrate pocket. Tyr202 functions as the Proton acceptor in the catalytic mechanism. Lys206 serves as a coordination point for NADP(+).

This sequence belongs to the short-chain dehydrogenases/reductases (SDR) family. 17-beta-HSD 3 subfamily.

It catalyses the reaction a very-long-chain (3R)-3-hydroxyacyl-CoA + NADP(+) = a very-long-chain 3-oxoacyl-CoA + NADPH + H(+). Its pathway is lipid metabolism; fatty acid biosynthesis. Its function is as follows. Required for branched chain fatty acid synthesis. Catalyzes the reduction of the 3-ketoacyl-CoA intermediate that is formed in each cycle of fatty acid elongation. Very long-chain fatty acids (VLCFAs) serve as precursors for ceramide and sphingolipids. May also be required for sterol hormone production. The protein is Very-long-chain 3-oxooacyl-coA reductase let-767 of Caenorhabditis briggsae.